The sequence spans 151 residues: Transcriptional repressor NrdR (151 aa).

A zinc finger spans residues 3 to 34; that stretch reads CPYCGYGESKVVDSRATDDKMAIRRRRECLKC. The ATP-cone domain occupies 49–139; it reads LLVIKKNMSR…VYRQFKDINT (91 aa).

The protein belongs to the NrdR family. The cofactor is Zn(2+).

In terms of biological role, negatively regulates transcription of bacterial ribonucleotide reductase nrd genes and operons by binding to NrdR-boxes. The sequence is that of Transcriptional repressor NrdR from Clostridium kluyveri (strain NBRC 12016).